Reading from the N-terminus, the 658-residue chain is DNA-binding protein Rfx5 (658 aa).

The span at 1–10 shows a compositional bias: basic and acidic residues; sequence MAEDKPDAKS. The segment at 1–28 is disordered; that stretch reads MAEDKPDAKSPKTGARPQGGADAGEPTT. The residue at position 2 (A2) is an N-acetylalanine. A Phosphoserine modification is found at S10. The tract at residues 24 to 89 is N-terminal domain; it reads GEPTTLLQRL…PSLLSNEEYM (66 aa). The leucine-rich region; critical for dimer formation and for interaction with RFXAP stretch occupies residues 61-65; that stretch reads LYLYL. Positions 91–167 form a DNA-binding region, RFX-type winged-helix; it reads AYRWIRNHLE…YCYSGIRRKT (77 aa). The PxLPxI/L motif; mediates interaction with RFXANK motif lies at 172 to 177; that stretch reads PPLPGL. Residue S184 is modified to Phosphoserine. Disordered regions lie at residues 250 to 315, 382 to 422, 443 to 602, and 624 to 658; these read LAEE…SSVP, AGPG…GLGA, VPPR…DKIP, and KGEADAATQGNKGLKGRVLQSSLTPEHKDPKATPP. The segment covering 277 to 309 has biased composition (basic and acidic residues); it reads GPKKPERPAQPPKEQEARAGTDLPGRAERKKSV. Composition is skewed to gly residues over residues 382-398 and 406-422; these read AGPGPGPGLGPRFGPGP and PGLGAGLGPGLGPGLGA. Basic and acidic residues-rich tracts occupy residues 465–476 and 489–498; these read PRPHDKGIKRTA and PVKEMKHETQ. Residues 506-516 show a composition bias toward basic residues; it reads KRKRGRPRKKP. Basic and acidic residues predominate over residues 648 to 658; sequence PEHKDPKATPP.

The protein belongs to the RFX family. As to quaternary structure, homodimer. The RFX heterotetrameric complex consists of 2 molecules of RFX5 and one each of RFXAP and RFX-B/RFXANK; with each subunit representing a separate complementation group. Interacts (via PxLPxI/L motif) with RFXANK (via ankyrin repeats); the interaction is direct. RFX forms cooperative DNA binding complexes with X2BP and CBF/NF-Y. RFX associates with CIITA to form an active transcriptional complex. Phosphorylated.

Its subcellular location is the nucleus. Functionally, activates transcription from class II MHC promoters. Recognizes X-boxes. Mediates cooperative binding between RFX and NF-Y. RFX binds the X1 box of MHC-II promoters. This is DNA-binding protein Rfx5 (Rfx5) from Mus musculus (Mouse).